We begin with the raw amino-acid sequence, 292 residues long: Poly(U)-specific endoribonuclease-A (292 aa).

Positions 8-285 constitute an EndoU domain; the sequence is LNHELSKLFN…IGTAYPVLLS (278 aa). Catalysis depends on residues histidine 162, histidine 178, and lysine 224.

Belongs to the ENDOU family. Monomer. Mn(2+) is required as a cofactor.

The protein resides in the nucleus. The enzyme catalyses uridylyl-uridylyl-ribonucleotide-RNA = a 3'-end uridylyl-2',3'-cyclophospho-uridine-RNA + a 5'-end dephospho-ribonucleoside-RNA. Its function is as follows. Poly(U)-specific endoribonuclease involved in the processing of intron-encoded box C/D snoRNAs, such as U16 and U86. Releases products that have 2',3'-cyclic phosphate termini at the 3'-end. In Xenopus laevis (African clawed frog), this protein is Poly(U)-specific endoribonuclease-A (endou-a).